Reading from the N-terminus, the 412-residue chain is Putative competence-damage inducible protein (412 aa).

Belongs to the CinA family.

This chain is Putative competence-damage inducible protein, found in Bacillus cereus (strain ATCC 14579 / DSM 31 / CCUG 7414 / JCM 2152 / NBRC 15305 / NCIMB 9373 / NCTC 2599 / NRRL B-3711).